The primary structure comprises 89 residues: Co-chaperonin GroES (89 aa).

Belongs to the GroES chaperonin family. As to quaternary structure, heptamer of 7 subunits arranged in a ring. Interacts with the chaperonin GroEL.

The protein resides in the cytoplasm. Functionally, together with the chaperonin GroEL, plays an essential role in assisting protein folding. The GroEL-GroES system forms a nano-cage that allows encapsulation of the non-native substrate proteins and provides a physical environment optimized to promote and accelerate protein folding. GroES binds to the apical surface of the GroEL ring, thereby capping the opening of the GroEL channel. This chain is Co-chaperonin GroES, found in Petrotoga mobilis (strain DSM 10674 / SJ95).